The primary structure comprises 149 residues: Nucleoside diphosphate kinase (149 aa).

ATP contacts are provided by Lys-9, Phe-57, Arg-85, Thr-91, Arg-102, and Asn-112. Residue His-115 is the Pros-phosphohistidine intermediate of the active site.

Belongs to the NDK family. Homotetramer. The cofactor is Mg(2+).

Its subcellular location is the cytoplasm. The catalysed reaction is a 2'-deoxyribonucleoside 5'-diphosphate + ATP = a 2'-deoxyribonucleoside 5'-triphosphate + ADP. It catalyses the reaction a ribonucleoside 5'-diphosphate + ATP = a ribonucleoside 5'-triphosphate + ADP. Major role in the synthesis of nucleoside triphosphates other than ATP. The ATP gamma phosphate is transferred to the NDP beta phosphate via a ping-pong mechanism, using a phosphorylated active-site intermediate. The chain is Nucleoside diphosphate kinase from Staphylococcus epidermidis (strain ATCC 35984 / DSM 28319 / BCRC 17069 / CCUG 31568 / BM 3577 / RP62A).